We begin with the raw amino-acid sequence, 443 residues long: Glutamyl-tRNA reductase (443 aa).

Substrate is bound by residues 49–52 (TCNR), S109, 114–116 (ETQ), and Q120. The active-site Nucleophile is C50. NADP(+) is bound at residue 189–194 (GAGKMS).

This sequence belongs to the glutamyl-tRNA reductase family. As to quaternary structure, homodimer.

The catalysed reaction is (S)-4-amino-5-oxopentanoate + tRNA(Glu) + NADP(+) = L-glutamyl-tRNA(Glu) + NADPH + H(+). It functions in the pathway porphyrin-containing compound metabolism; protoporphyrin-IX biosynthesis; 5-aminolevulinate from L-glutamyl-tRNA(Glu): step 1/2. Functionally, catalyzes the NADPH-dependent reduction of glutamyl-tRNA(Glu) to glutamate 1-semialdehyde (GSA). This chain is Glutamyl-tRNA reductase, found in Heliobacterium mobile (Heliobacillus mobilis).